The following is a 221-amino-acid chain: Cytidylate kinase 1 (221 aa).

Gly-7 to Ser-15 is a binding site for ATP.

This sequence belongs to the cytidylate kinase family. Type 1 subfamily.

The protein resides in the cytoplasm. It catalyses the reaction CMP + ATP = CDP + ADP. The enzyme catalyses dCMP + ATP = dCDP + ADP. The polypeptide is Cytidylate kinase 1 (Borrelia garinii subsp. bavariensis (strain ATCC BAA-2496 / DSM 23469 / PBi) (Borreliella bavariensis)).